Reading from the N-terminus, the 429-residue chain is GDP-fucose protein O-fucosyltransferase 2 (429 aa).

The N-terminal stretch at 1-21 (MATLSFVFLLLGAVSWPPASA) is a signal peptide. GDP-beta-L-fucose is bound at residue 53-57 (PEGFN). The Proton acceptor role is filled by Glu-54. A disulfide bridge links Cys-161 with Cys-192. Asn-189, Asn-209, and Asn-259 each carry an N-linked (GlcNAc...) asparagine glycan. Residues 292–294 (HLR), Asp-371, and 388–389 (TF) each bind GDP-beta-L-fucose. Cys-412 and Cys-419 are oxidised to a cystine.

The protein belongs to the glycosyltransferase 68 family.

The protein localises to the endoplasmic reticulum. It is found in the golgi apparatus. The catalysed reaction is L-seryl-[protein] + GDP-beta-L-fucose = 3-O-(alpha-L-fucosyl)-L-seryl-[protein] + GDP + H(+). It carries out the reaction L-threonyl-[protein] + GDP-beta-L-fucose = 3-O-(alpha-L-fucosyl)-L-threonyl-[protein] + GDP + H(+). It functions in the pathway protein modification; protein glycosylation. In terms of biological role, catalyzes the reaction that attaches fucose through an O-glycosidic linkage to a conserved serine or threonine residue in the consensus sequence C1-X-X-S/T-C2 of thrombospondin type I repeats (TSRs) where C1 and C2 are the first and second cysteines of the repeat, respectively. O-fucosylates members of several protein families including the ADAMTS, the thrombospondin (TSP) and spondin families. Required for the proper secretion of ADAMTS family members such as ADAMTSL1 and ADAMTS13. The O-fucosylation of TSRs is also required for restricting epithelial to mesenchymal transition (EMT), maintaining the correct patterning of mesoderm and localization of the definite endoderm. This Pan troglodytes (Chimpanzee) protein is GDP-fucose protein O-fucosyltransferase 2 (POFUT2).